A 379-amino-acid chain; its full sequence is MSELSFDAPVWHHGKALRKGYTTGSCATAAAKVAALMVLRQHLIHQVSIVTPSGVTLCLNVESPHIEGQQAIAAIRKDGGDDVDATHGMLIFARVTLNDSGEITLTGGEGIGTVTRKGIGLPLGSAAINRTPRHTIESAVREAIGPARGADVEIFAPEGEVRAQKTYNSRLGILGGISIIGTTGIVTPMSEESWKRSLSLELEIKRASGLTRVILVPGNHGERFVREQMGVDTQAVVTMSNFVGYMIEEAVRLGFCQIVLVGHPGKLIKIAAGIFHTHSHIADARMETLVAHLALLGAPLELLTLVSDCDTTEAAMEHIEAYGFGHIYNHLARRICLRVMQMLRFTKTQPVCDAILFSFDNHILGSNRPVDEIAKELQC.

This sequence belongs to the CbiD family.

The enzyme catalyses Co-precorrin-5B + S-adenosyl-L-methionine = Co-precorrin-6A + S-adenosyl-L-homocysteine. It functions in the pathway cofactor biosynthesis; adenosylcobalamin biosynthesis; cob(II)yrinate a,c-diamide from sirohydrochlorin (anaerobic route): step 6/10. Its function is as follows. Catalyzes the methylation of C-1 in cobalt-precorrin-5B to form cobalt-precorrin-6A. This Salmonella heidelberg (strain SL476) protein is Cobalt-precorrin-5B C(1)-methyltransferase.